A 143-amino-acid chain; its full sequence is Probable cyclic pyranopterin monophosphate synthase (143 aa).

Residues 61–63 (YCH) and 97–98 (ME) contribute to the substrate site. Asp-112 is a catalytic residue.

Belongs to the MoaC family. As to quaternary structure, homohexamer; trimer of dimers.

It carries out the reaction (8S)-3',8-cyclo-7,8-dihydroguanosine 5'-triphosphate = cyclic pyranopterin phosphate + diphosphate. Its pathway is cofactor biosynthesis; molybdopterin biosynthesis. Catalyzes the conversion of (8S)-3',8-cyclo-7,8-dihydroguanosine 5'-triphosphate to cyclic pyranopterin monophosphate (cPMP). In Thermoplasma acidophilum (strain ATCC 25905 / DSM 1728 / JCM 9062 / NBRC 15155 / AMRC-C165), this protein is Probable cyclic pyranopterin monophosphate synthase.